The sequence spans 115 residues: UPF0145 protein lp_2083 (115 aa).

Belongs to the UPF0145 family.

The polypeptide is UPF0145 protein lp_2083 (Lactiplantibacillus plantarum (strain ATCC BAA-793 / NCIMB 8826 / WCFS1) (Lactobacillus plantarum)).